A 403-amino-acid polypeptide reads, in one-letter code: Large ribosomal subunit protein uL3 (403 aa).

Residues 1–38 (MSHRKFSAPRHGSLGFLPRKRSSRHRGKVKSFPKDDSS) are disordered. Ser-13 carries the phosphoserine modification. Residues 18-31 (PRKRSSRHRGKVKS) are compositionally biased toward basic residues. Lys-39 participates in a covalent cross-link: Glycyl lysine isopeptide (Lys-Gly) (interchain with G-Cter in SUMO2). The residue at position 136 (Lys-136) is an N6-acetyllysine. Glycyl lysine isopeptide (Lys-Gly) (interchain with G-Cter in SUMO2) cross-links involve residues Lys-224 and Lys-226. His-245 is subject to Tele-methylhistidine. An N6-acetyllysine; alternate mark is found at Lys-286 and Lys-294. Lys-286 is covalently cross-linked (Glycyl lysine isopeptide (Lys-Gly) (interchain with G-Cter in SUMO2); alternate). Lys-294 is covalently cross-linked (Glycyl lysine isopeptide (Lys-Gly) (interchain with G-Cter in SUMO1); alternate). A Phosphoserine modification is found at Ser-304. Position 366 is an N6-acetyllysine; alternate (Lys-366). Lys-366 is covalently cross-linked (Glycyl lysine isopeptide (Lys-Gly) (interchain with G-Cter in SUMO2); alternate). At Lys-373 the chain carries N6-acetyllysine. Glycyl lysine isopeptide (Lys-Gly) (interchain with G-Cter in SUMO2) cross-links involve residues Lys-386, Lys-393, and Lys-399.

The protein belongs to the universal ribosomal protein uL3 family. In terms of assembly, component of the large ribosomal subunit. Interacts with DHX33. Constitutively monomethylated at His-245 by METTL18. Methylation at His-245 regulates translation elongation by slowing ribosome traversal on tyrosine codons: slower elongation provides enough time for proper folding of synthesized proteins and prevents cellular aggregation of tyrosine-rich proteins It is not required for incorporation of RPL3 into ribosomes.

Its subcellular location is the nucleus. It localises to the nucleolus. It is found in the cytoplasm. In terms of biological role, component of the large ribosomal subunit. The ribosome is a large ribonucleoprotein complex responsible for the synthesis of proteins in the cell. The sequence is that of Large ribosomal subunit protein uL3 (RPL3) from Sus scrofa (Pig).